Consider the following 204-residue polypeptide: Phosphopantothenoylcysteine decarboxylase (204 aa).

FMN contacts are provided by residues phenylalanine 59 and 104–107 (DANT). Substrate is bound at residue asparagine 140. Cysteine 173 (proton donor) is an active-site residue.

Belongs to the HFCD (homooligomeric flavin containing Cys decarboxylase) superfamily. As to quaternary structure, homotrimer. FMN serves as cofactor.

The catalysed reaction is N-[(R)-4-phosphopantothenoyl]-L-cysteine + H(+) = (R)-4'-phosphopantetheine + CO2. Its pathway is cofactor biosynthesis; coenzyme A biosynthesis; CoA from (R)-pantothenate: step 3/5. Functionally, catalyzes the decarboxylation of the cysteine moiety of 4-phosphopantothenoylcysteine to form 4'-phosphopantotheine and this reaction forms part of the biosynthesis of coenzyme A. This chain is Phosphopantothenoylcysteine decarboxylase (PPCDC), found in Homo sapiens (Human).